We begin with the raw amino-acid sequence, 698 residues long: MSSFQGQMEEYPTISIDRFDRENLKARAYFLSHCHKDHMKGLRAPSMKRRLECSLKVFLYCSPVTKELLLTSPKYKFWENRIIAIEIETPTQVSLVDEASGEKEEVVVTLLPAGHCPGSVMFLFQGSNGTVLYTGDFRLAKGEVSRMELLHSGGRVKDIQSVYLDTTFCDPRFYQIPSREECLRGVLELVRSWITRSPKHVVWLNCKAAYGYEYLFTNLSEELGVQVHVDKLDMFKNMPDILHHLTTDRNTQIHACRHPKAEEYFQWNKLPCGMASKTKTVLHTISIKPSTMWFGERTRKTNVIVRTGESSYRACFSFHSSYSEIKDFLSYICPVNAYPNVIPIGLTVDKVMDFLKPLCRSSQCAEPKYKPLGKLKRARTVHLDSEEDDDLFDDPLLTHSRRKVPYQVTLHPEVFSMKALPLDQPELGQSPGCCKAESMPSPSLANFVDCDESNSDSEGELETPPSLQGGLGPTTLPQQNADPDVDVPRWEVFFKRKDEITDECLENLPSSIETGGSQSPKRFSDSPKLGSDSDGESTHISSQNSSQSTHITDQGSQGWDSQCDTVLLSSQEKSGGDSTSLNKDTYKPKPKDSISASQIEQNALCPQDTHCDLKSGAEVNGVPCIEEPDTVSGRKSSPEKTSLTSTQADSQSSSDFEIPSTPEAELPKPEHLQFLYGKLATGESIVLKKENVHSQIFK.

Residue threonine 380 is modified to Phosphothreonine. Serine 385 carries the phosphoserine modification. 3 disordered regions span residues 445–485 (ANFV…DPDV), 505–595 (LENL…DSIS), and 620–669 (NGVP…LPKP). The span at 449–461 (DCDESNSDSEGEL) shows a compositional bias: acidic residues. The segment covering 508–521 (LPSSIETGGSQSPK) has biased composition (polar residues). Low complexity predominate over residues 538–551 (THISSQNSSQSTHI). The span at 552–583 (TDQGSQGWDSQCDTVLLSSQEKSGGDSTSLNK) shows a compositional bias: polar residues. Over residues 641–655 (TSLTSTQADSQSSSD) the composition is skewed to low complexity. Residue serine 650 is modified to Phosphoserine; by ATM.

Belongs to the DNA repair metallo-beta-lactamase (DRMBL) family. Interacts with LIG4; the interaction is direct. Interacts with ATM. Interacts with BRCA1. Interacts with PRKDC. Interacts with TP53BP1. Also exhibits ATM- and phosphorylation-dependent interaction with the MRN complex, composed of MRE11, RAD50, and NBN. In terms of processing, phosphorylation on undefined residues by PRKDC may stimulate endonucleolytic activity on 5' and 3' hairpins and overhangs. PRKDC must remain present, even after phosphorylation, for efficient hairpin opening. Also phosphorylated by ATM in response to ionizing radiation (IR) and by ATR in response to ultraviolet (UV) radiation.

The protein localises to the nucleus. Its function is as follows. Required for V(D)J recombination, the process by which exons encoding the antigen-binding domains of immunoglobulins and T-cell receptor proteins are assembled from individual V, (D), and J gene segments. V(D)J recombination is initiated by the lymphoid specific RAG endonuclease complex, which generates site specific DNA double strand breaks (DSBs). These DSBs present two types of DNA end structures: hairpin sealed coding ends and phosphorylated blunt signal ends. These ends are independently repaired by the non homologous end joining (NHEJ) pathway to form coding and signal joints respectively. This protein exhibits single-strand specific 5'-3' exonuclease activity in isolation, and acquires endonucleolytic activity on 5' and 3' hairpins and overhangs when in a complex with PRKDC. The latter activity is required specifically for the resolution of closed hairpins prior to the formation of the coding joint. May also be required for the repair of complex DSBs induced by ionizing radiation, which require substantial end-processing prior to religation by NHEJ. The protein is Protein artemis (Dclre1c) of Rattus norvegicus (Rat).